A 97-amino-acid polypeptide reads, in one-letter code: Co-chaperonin GroES (97 aa).

The protein belongs to the GroES chaperonin family. Heptamer of 7 subunits arranged in a ring. Interacts with the chaperonin GroEL.

The protein localises to the cytoplasm. Together with the chaperonin GroEL, plays an essential role in assisting protein folding. The GroEL-GroES system forms a nano-cage that allows encapsulation of the non-native substrate proteins and provides a physical environment optimized to promote and accelerate protein folding. GroES binds to the apical surface of the GroEL ring, thereby capping the opening of the GroEL channel. This Nocardioides sp. (strain ATCC BAA-499 / JS614) protein is Co-chaperonin GroES.